A 401-amino-acid polypeptide reads, in one-letter code: Probable sodium/metabolite cotransporter BASS1, chloroplastic (401 aa).

A chloroplast-targeting transit peptide spans 1 to 70; sequence MASAISLSLL…RRSRFDFVPR (70 aa). 9 helical membrane-spanning segments follow: residues 92 to 112, 122 to 142, 156 to 176, 187 to 207, 212 to 232, 247 to 267, 278 to 298, 311 to 331, and 371 to 391; these read FVGEAVSTAFPIWVSLGCLLG, VTPNWTIVGLTITMLGMGMTL, ELFAGFLLQYSVMPLSAFFVS, AGLILVGCCPGGTASNIVTYI, VALSVLMTAASTVSAVIMTPL, LGLLMSTLQVVLLPVLAGAFL, VSPVMPPIAVGTVAILCGYAI, QVVLASCLLHISGFLFGYLFS, and VPCAVSSVCHSILGSVLAGIW.

This sequence belongs to the bile acid:sodium symporter (BASS) (TC 2.A.28) family.

It is found in the membrane. It localises to the plastid. Its subcellular location is the chloroplast envelope. In terms of biological role, may function as sodium-coupled metabolite transporter across the chloroplast envelope. The protein is Probable sodium/metabolite cotransporter BASS1, chloroplastic (BASS1) of Arabidopsis thaliana (Mouse-ear cress).